A 300-amino-acid polypeptide reads, in one-letter code: Ribonuclease HIII (300 aa).

The RNase H type-2 domain maps to 83 to 300 (IPIIGSDEVG…THKAQALLTK (218 aa)). Positions 89, 90, and 194 each coordinate a divalent metal cation.

It belongs to the RNase HII family. RnhC subfamily. Mn(2+) serves as cofactor. It depends on Mg(2+) as a cofactor.

The protein resides in the cytoplasm. It carries out the reaction Endonucleolytic cleavage to 5'-phosphomonoester.. Endonuclease that specifically degrades the RNA of RNA-DNA hybrids. The chain is Ribonuclease HIII from Streptococcus pyogenes serotype M2 (strain MGAS10270).